A 317-amino-acid chain; its full sequence is Olfactory receptor-like protein OLF3 (317 aa).

Topologically, residues 1–25 (MGTGNQTWVREFVLLGLSSDWDTEV) are extracellular. Residue Asn-5 is glycosylated (N-linked (GlcNAc...) asparagine). Residues 26 to 49 (SLFVLFLITYMVTVLGNFLIILLI) form a helical membrane-spanning segment. The Cytoplasmic portion of the chain corresponds to 50–57 (RLDSRLHT). A helical transmembrane segment spans residues 58–79 (PMYFFLTNLSLVDVSYATSIIP). The Extracellular segment spans residues 80 to 100 (QMLAHLLAAHKAIPFVSCAAQ). A helical transmembrane segment spans residues 101–120 (LFFSLGLGGIEFVLLAVMAY). The Cytoplasmic portion of the chain corresponds to 121-139 (DRYVAVCDPLRYSVIMHGG). The chain crosses the membrane as a helical span at residues 140 to 158 (LCTRLAITSWVSGSMNSLM). At 159–196 (QTVITFQLPMCTNKYIDHISCELLAVVRLACVDTSSNE) the chain is on the extracellular side. Residues 197-219 (IAIMVSSIVLLMTPFCLVLLSYI) traverse the membrane as a helical segment. The Cytoplasmic portion of the chain corresponds to 220–236 (QIISTILKIQSTEGRKK). Residues 237-260 (AFHTCASHLTVVVLCYGMAIFTYI) form a helical membrane-spanning segment. Over 261-272 (QPRSSPSVLQEK) the chain is Extracellular. A helical membrane pass occupies residues 273-292 (LISLFYSVLTPMLNPMIYSV). Topologically, residues 293 to 317 (RNKEVKGAWQKLLGQLTGITSKLAT) are cytoplasmic.

This sequence belongs to the G-protein coupled receptor 1 family.

The protein resides in the cell membrane. Putative odorant or sperm cell receptor. The sequence is that of Olfactory receptor-like protein OLF3 from Canis lupus familiaris (Dog).